A 251-amino-acid chain; its full sequence is Dihydroorotate dehydrogenase B (NAD(+)), electron transfer subunit homolog (251 aa).

The 100-residue stretch at 2-101 folds into the FAD-binding FR-type domain; sequence LAELNAEVLE…FLPLGKRLFS (100 aa). Residues Cys-217, Cys-222, Cys-225, and Cys-238 each coordinate [2Fe-2S] cluster.

The protein belongs to the PyrK family. Requires [2Fe-2S] cluster as cofactor. FAD serves as cofactor.

This chain is Dihydroorotate dehydrogenase B (NAD(+)), electron transfer subunit homolog, found in Aquifex aeolicus (strain VF5).